Here is a 396-residue protein sequence, read N- to C-terminus: Elongation factor Tu (396 aa).

The 197-residue stretch at 10-206 folds into the tr-type G domain; that stretch reads KPHVNVGTIG…AVDAYIPTPQ (197 aa). Positions 19–26 are G1; that stretch reads GHVDHGKT. 19 to 26 is a GTP binding site; the sequence is GHVDHGKT. T26 is a binding site for Mg(2+). The G2 stretch occupies residues 60 to 64; sequence GITIA. The segment at 81 to 84 is G3; that stretch reads DCPG. GTP-binding positions include 81–85 and 136–139; these read DCPGH and NKVD. Residues 136-139 form a G4 region; sequence NKVD. Residues 174–176 form a G5 region; it reads SAL.

This sequence belongs to the TRAFAC class translation factor GTPase superfamily. Classic translation factor GTPase family. EF-Tu/EF-1A subfamily. As to quaternary structure, monomer.

It is found in the cytoplasm. The enzyme catalyses GTP + H2O = GDP + phosphate + H(+). GTP hydrolase that promotes the GTP-dependent binding of aminoacyl-tRNA to the A-site of ribosomes during protein biosynthesis. The polypeptide is Elongation factor Tu (Anaeromyxobacter dehalogenans (strain 2CP-C)).